Consider the following 190-residue polypeptide: U1 small nuclear ribonucleoprotein C-1 (190 aa).

The Matrin-type zinc finger occupies 4–36 (YYCDYCDVFLVSESPSVRKAHNSGRNHLTNVRD). A disordered region spans residues 57-190 (FETGGGNSTS…PDRARQLGLI (134 aa)). Over residues 72 to 82 (GNPPGSQPGPP) the composition is skewed to pro residues. A compositionally biased stretch (low complexity) spans 109 to 124 (AMLALMNGQNGMSSPG). Residues 125-141 (SGPPPMRFAGPPIPNNM) show a composition bias toward pro residues. Positions 180-190 (NPDRARQLGLI) are enriched in basic and acidic residues.

This sequence belongs to the U1 small nuclear ribonucleoprotein C family. U1 snRNP is composed of the 7 core Sm proteins B/B', D1, D2, D3, E, F and G that assemble in a heptameric protein ring on the Sm site of the small nuclear RNA to form the core snRNP, and at least 3 U1 snRNP-specific proteins U1-70K, U1-A and U1-C. U1-C interacts with U1 snRNA and the 5' splice-site region of the pre-mRNA.

Its subcellular location is the nucleus. Its function is as follows. Component of the spliceosomal U1 snRNP, which is essential for recognition of the pre-mRNA 5' splice-site and the subsequent assembly of the spliceosome. U1-C is directly involved in initial 5' splice-site recognition for both constitutive and regulated alternative splicing. The interaction with the 5' splice-site seems to precede base-pairing between the pre-mRNA and the U1 snRNA. Stimulates commitment or early (E) complex formation by stabilizing the base pairing of the 5' end of the U1 snRNA and the 5' splice-site region. In Puccinia graminis f. sp. tritici (strain CRL 75-36-700-3 / race SCCL) (Black stem rust fungus), this protein is U1 small nuclear ribonucleoprotein C-1.